Here is a 184-residue protein sequence, read N- to C-terminus: Peptidyl-tRNA hydrolase (184 aa).

Tyrosine 14 is a binding site for tRNA. The active-site Proton acceptor is histidine 19. Phenylalanine 64, asparagine 66, and asparagine 112 together coordinate tRNA.

Belongs to the PTH family. In terms of assembly, monomer.

The protein resides in the cytoplasm. It catalyses the reaction an N-acyl-L-alpha-aminoacyl-tRNA + H2O = an N-acyl-L-amino acid + a tRNA + H(+). Functionally, hydrolyzes ribosome-free peptidyl-tRNAs (with 1 or more amino acids incorporated), which drop off the ribosome during protein synthesis, or as a result of ribosome stalling. In terms of biological role, catalyzes the release of premature peptidyl moieties from peptidyl-tRNA molecules trapped in stalled 50S ribosomal subunits, and thus maintains levels of free tRNAs and 50S ribosomes. The protein is Peptidyl-tRNA hydrolase of Listeria welshimeri serovar 6b (strain ATCC 35897 / DSM 20650 / CCUG 15529 / CIP 8149 / NCTC 11857 / SLCC 5334 / V8).